The chain runs to 234 residues: Purine nucleoside phosphorylase DeoD-type (234 aa).

His4 provides a ligand contact to a purine D-ribonucleoside. Phosphate is bound by residues Gly20, Arg24, Arg43, and 87-90 (RVGT). A purine D-ribonucleoside contacts are provided by residues Glu162, 178–180 (EME), and 202–203 (SD). Residue Asp203 is the Proton donor of the active site.

It belongs to the PNP/UDP phosphorylase family. In terms of assembly, homohexamer; trimer of homodimers.

It carries out the reaction a purine D-ribonucleoside + phosphate = a purine nucleobase + alpha-D-ribose 1-phosphate. It catalyses the reaction a purine 2'-deoxy-D-ribonucleoside + phosphate = a purine nucleobase + 2-deoxy-alpha-D-ribose 1-phosphate. Its function is as follows. Catalyzes the reversible phosphorolytic breakdown of the N-glycosidic bond in the beta-(deoxy)ribonucleoside molecules, with the formation of the corresponding free purine bases and pentose-1-phosphate. Functionally, cleavage of adenosine and its derivatives. This Geobacillus stearothermophilus (Bacillus stearothermophilus) protein is Purine nucleoside phosphorylase DeoD-type.